The chain runs to 234 residues: Sperm-associated microtubule inner protein 5 (234 aa).

Microtubule inner protein component of sperm flagellar doublet microtubules. In terms of tissue distribution, expressed in testis (at protein level). Strongly expressed in peritubular cells and Leydig cells and weakly expressed in the cytoplasm of spermatocytes.

It localises to the cytoplasm. It is found in the cytoskeleton. The protein resides in the flagellum axoneme. Its subcellular location is the nucleus. Microtubule inner protein (MIP) part of the dynein-decorated doublet microtubules (DMTs) in flagellum axoneme. May serve to reinforce and thus stabilize the microtubule structure in the sperm flagella. The protein is Sperm-associated microtubule inner protein 5 of Homo sapiens (Human).